Here is a 526-residue protein sequence, read N- to C-terminus: 1,4-beta-D-glucan cellobiohydrolase B (526 aa).

A signal peptide spans 1 to 23 (MASSFQLYKALLFFSSLLSAVQA). Residues 24–458 (QKVGTQQAEV…SNIKFGPIGS (435 aa)) are catalytic. E235 functions as the Nucleophile in the catalytic mechanism. E240 functions as the Proton donor in the catalytic mechanism. 2 N-linked (GlcNAc...) asparagine glycosylation sites follow: N293 and N400. The ser/Thr-rich linker stretch occupies residues 459-490 (TFGNGGGSGPTTTVTTSTATSTTSSATSTATG). The tract at residues 464–488 (GGSGPTTTVTTSTATSTTSSATSTA) is disordered. A compositionally biased stretch (low complexity) spans 468-488 (PTTTVTTSTATSTTSSATSTA). Positions 490–526 (GQAQHWEQCGGNGWTGPTVCASPWACTVVNSWYSQCL) constitute a CBM1 domain. 2 disulfide bridges follow: C498–C515 and C509–C525.

This sequence belongs to the glycosyl hydrolase 7 (cellulase C) family.

Its subcellular location is the secreted. The catalysed reaction is Hydrolysis of (1-&gt;4)-beta-D-glucosidic linkages in cellulose and cellotetraose, releasing cellobiose from the non-reducing ends of the chains.. Functionally, the biological conversion of cellulose to glucose generally requires three types of hydrolytic enzymes: (1) Endoglucanases which cut internal beta-1,4-glucosidic bonds; (2) Exocellobiohydrolases that cut the disaccharide cellobiose from the non-reducing end of the cellulose polymer chain; (3) Beta-1,4-glucosidases which hydrolyze the cellobiose and other short cello-oligosaccharides to glucose. The protein is 1,4-beta-D-glucan cellobiohydrolase B (cbhB) of Emericella nidulans (strain FGSC A4 / ATCC 38163 / CBS 112.46 / NRRL 194 / M139) (Aspergillus nidulans).